We begin with the raw amino-acid sequence, 448 residues long: Probable glycine dehydrogenase (decarboxylating) subunit 1 (448 aa).

This sequence belongs to the GcvP family. N-terminal subunit subfamily. In terms of assembly, the glycine cleavage system is composed of four proteins: P, T, L and H. In this organism, the P 'protein' is a heterodimer of two subunits.

The enzyme catalyses N(6)-[(R)-lipoyl]-L-lysyl-[glycine-cleavage complex H protein] + glycine + H(+) = N(6)-[(R)-S(8)-aminomethyldihydrolipoyl]-L-lysyl-[glycine-cleavage complex H protein] + CO2. Its function is as follows. The glycine cleavage system catalyzes the degradation of glycine. The P protein binds the alpha-amino group of glycine through its pyridoxal phosphate cofactor; CO(2) is released and the remaining methylamine moiety is then transferred to the lipoamide cofactor of the H protein. This is Probable glycine dehydrogenase (decarboxylating) subunit 1 from Rhodospirillum rubrum (strain ATCC 11170 / ATH 1.1.1 / DSM 467 / LMG 4362 / NCIMB 8255 / S1).